Reading from the N-terminus, the 690-residue chain is Methionine--tRNA ligase 1 (690 aa).

The 'HIGH' region motif lies at 11–21; the sequence is PYANGHIHIGH. Residues Cys142, Cys145, Cys155, and Cys158 each contribute to the Zn(2+) site. The short motif at 328–332 is the 'KMSKS' region element; sequence KMSKS. Lys331 contributes to the ATP binding site. The tRNA-binding domain occupies 590 to 690; that stretch reads DFSKVDLRVA…SGAKPGMRVH (101 aa).

The protein belongs to the class-I aminoacyl-tRNA synthetase family. MetG type 1 subfamily. As to quaternary structure, homodimer. It depends on Zn(2+) as a cofactor.

Its subcellular location is the cytoplasm. The catalysed reaction is tRNA(Met) + L-methionine + ATP = L-methionyl-tRNA(Met) + AMP + diphosphate. Functionally, is required not only for elongation of protein synthesis but also for the initiation of all mRNA translation through initiator tRNA(fMet) aminoacylation. The polypeptide is Methionine--tRNA ligase 1 (Sorangium cellulosum (strain So ce56) (Polyangium cellulosum (strain So ce56))).